The sequence spans 90 residues: Small ribosomal subunit protein uS15c (90 aa).

Belongs to the universal ribosomal protein uS15 family. Part of the 30S ribosomal subunit.

The protein localises to the plastid. It localises to the chloroplast. This Morus indica (Mulberry) protein is Small ribosomal subunit protein uS15c (rps15).